A 448-amino-acid chain; its full sequence is Phosphoglucosamine mutase (448 aa).

The active-site Phosphoserine intermediate is serine 100. Mg(2+) contacts are provided by serine 100, aspartate 240, aspartate 242, and aspartate 244. Serine 100 is subject to Phosphoserine.

Belongs to the phosphohexose mutase family. Mg(2+) serves as cofactor. Activated by phosphorylation.

It carries out the reaction alpha-D-glucosamine 1-phosphate = D-glucosamine 6-phosphate. Catalyzes the conversion of glucosamine-6-phosphate to glucosamine-1-phosphate. The polypeptide is Phosphoglucosamine mutase (Clostridium beijerinckii (strain ATCC 51743 / NCIMB 8052) (Clostridium acetobutylicum)).